A 174-amino-acid chain; its full sequence is Large ribosomal subunit protein uL10 (174 aa).

This sequence belongs to the universal ribosomal protein uL10 family. Part of the ribosomal stalk of the 50S ribosomal subunit. The N-terminus interacts with L11 and the large rRNA to form the base of the stalk. The C-terminus forms an elongated spine to which L12 dimers bind in a sequential fashion forming a multimeric L10(L12)X complex.

Functionally, forms part of the ribosomal stalk, playing a central role in the interaction of the ribosome with GTP-bound translation factors. This Synechococcus sp. (strain RCC307) protein is Large ribosomal subunit protein uL10.